The chain runs to 263 residues: Proteasome subunit alpha type-1 (263 aa).

Residue Met-1 is modified to N-acetylmethionine. At Ser-110 the chain carries Phosphoserine; alternate. The O-linked (GlcNAc) serine; alternate glycan is linked to Ser-110. Residue Lys-115 forms a Glycyl lysine isopeptide (Lys-Gly) (interchain with G-Cter in ubiquitin) linkage. Ser-177 is subject to Phosphoserine. Lys-208 is covalently cross-linked (Glycyl lysine isopeptide (Lys-Gly) (interchain with G-Cter in ubiquitin)). Positions 232–263 are disordered; the sequence is FLDGLEERPQRKAQPSQAAEEPAEKADEPMEH. Over residues 253–263 the composition is skewed to basic and acidic residues; it reads PAEKADEPMEH.

It belongs to the peptidase T1A family. The 26S proteasome consists of a 20S proteasome core and two 19S regulatory subunits. The 20S proteasome core is a barrel-shaped complex made of 28 subunits that are arranged in four stacked rings. The two outer rings are each formed by seven alpha subunits, and the two inner rings are formed by seven beta subunits. The proteolytic activity is exerted by three beta-subunits PSMB5, PSMB6 and PSMB7. Interacts with NOTCH3. Interacts with ZFAND1. Post-translationally, C-terminal extension is partially cleaved off by limited proteolysis leading to a conversion of the proteasome from its latent into its active form. As to expression, detected in liver (at protein level).

It is found in the cytoplasm. The protein resides in the nucleus. In terms of biological role, component of the 20S core proteasome complex involved in the proteolytic degradation of most intracellular proteins. This complex plays numerous essential roles within the cell by associating with different regulatory particles. Associated with two 19S regulatory particles, forms the 26S proteasome and thus participates in the ATP-dependent degradation of ubiquitinated proteins. The 26S proteasome plays a key role in the maintenance of protein homeostasis by removing misfolded or damaged proteins that could impair cellular functions, and by removing proteins whose functions are no longer required. Associated with the PA200 or PA28, the 20S proteasome mediates ubiquitin-independent protein degradation. This type of proteolysis is required in several pathways including spermatogenesis (20S-PA200 complex) or generation of a subset of MHC class I-presented antigenic peptides (20S-PA28 complex). The polypeptide is Proteasome subunit alpha type-1 (Psma1) (Mus musculus (Mouse)).